The primary structure comprises 369 residues: Aminomethyltransferase (369 aa).

Belongs to the GcvT family. As to quaternary structure, the glycine cleavage system is composed of four proteins: P, T, L and H.

The catalysed reaction is N(6)-[(R)-S(8)-aminomethyldihydrolipoyl]-L-lysyl-[protein] + (6S)-5,6,7,8-tetrahydrofolate = N(6)-[(R)-dihydrolipoyl]-L-lysyl-[protein] + (6R)-5,10-methylene-5,6,7,8-tetrahydrofolate + NH4(+). In terms of biological role, the glycine cleavage system catalyzes the degradation of glycine. The protein is Aminomethyltransferase of Xanthomonas euvesicatoria pv. vesicatoria (strain 85-10) (Xanthomonas campestris pv. vesicatoria).